A 68-amino-acid chain; its full sequence is uncharacterized protein (68 aa).

The next 2 membrane-spanning stretches (helical) occupy residues 1 to 21 (MLFI…YFLP) and 28 to 48 (VHFS…LSSV).

The protein localises to the cell membrane. This is an uncharacterized protein from Haemophilus influenzae (strain ATCC 51907 / DSM 11121 / KW20 / Rd).